A 662-amino-acid polypeptide reads, in one-letter code: MLFNCFGILALLQILPALAYPPCREQMSDPYEFGESDLMRPGMHDTPLSLMQKREALAISLSKRDSVGSYAPYNVTCPSDYMLRPASDGISSGEQSFIDKRIPKINTQMRSFISNTGLDVDVNSVINDSDGPRLGLAFSGGGLRAMVHGGGVLNAFDSRNGNGSSLAGILQSAMYIAGLSGGSWLVGSVAVNNFANITYLRDNVWNLEHSVFAPHGDNVVENLAYYDDLDDEIDQKKDAGFDTSLTDLWGRALSRKLVDATQGGPNITFSSIRNQTWFQNADYPYPIIISDSRLEEEKAIPANTSIFEFTPYEFGTWDNGIKAFLPMEYVGTHLKNGVPPDHKCIRNYDNAGFVMGTSATLFNTFLLEWSQEVTSNSTLYDIIHKVFEKLSEDQNDIAPYPNPYQNFTTTNTTVKNPFERFDTIDLVDGGEDDENIPIWPLLHPQRFVDVIFAVDATYDDSNGWPDGSSIVTTYERIITYNANKSVDVRGFPYIPDEDTIISLGLNTHPTFFGCDGRNTTAGNHTVDNNTPPLLVYFPNYPWVYYSNISTFTMSMNDTLSSGILENAALSATQNNSDSFAVCLACAMIQRSLERKNMSTPSQCSSCFEQYCWNGTTVNNPSAVSNYAPTVLSASTTSGTSSVRAKPIVFYLFASLLTVSLLL.

Residues 1–19 form the signal peptide; sequence MLFNCFGILALLQILPALA. N74, N127, N162, N196, N266, N274, N303, N376, N406, N411, N483, N518, N523, N547, N556, N574, N596, and N613 each carry an N-linked (GlcNAc...) asparagine glycan. A PLA2c domain is found at 76–617; the sequence is TCPSDYMLRP…EQYCWNGTTV (542 aa).

It belongs to the lysophospholipase family.

The protein resides in the secreted. It carries out the reaction a 1-acyl-sn-glycero-3-phosphocholine + H2O = sn-glycerol 3-phosphocholine + a fatty acid + H(+). Functionally, catalyzes the release of fatty acids from lysophospholipids. This is Probable lysophospholipase 3 (plb3) from Schizosaccharomyces pombe (strain 972 / ATCC 24843) (Fission yeast).